A 962-amino-acid polypeptide reads, in one-letter code: Glutamate receptor 1 (962 aa).

The N-terminal stretch at 1 to 25 (MFSSFSFLNMFGVLFTVFNLTVVQP) is a signal peptide. Residues 26–591 (YPSHIIIKSF…SVFSFMQPLS (566 aa)) lie on the Extracellular side of the membrane. N-linked (GlcNAc...) asparagine glycans are attached at residues Asn-190, Asn-220, Asn-275, Asn-333, Asn-441, and Asn-482. The chain crosses the membrane as a helical span at residues 592–612 (TEIWMYIIFAYIGVSVVIFLV). Residues 613-668 (SRFSPYEWRVEETSRGGFTISNDFSVYNCLWFTLAAFMQQGTDILPRSISGRIASS) lie on the Cytoplasmic side of the membrane. The chain crosses the membrane as a helical span at residues 669–689 (AWWFFTMIIVSSYTANLAAFL). The Extracellular segment spans residues 690–855 (TLEKMQAPIE…GSSASLNLSK (166 aa)). Asn-852 carries an N-linked (GlcNAc...) asparagine glycan. Residues 856–876 (VAGIFYILMGGMVISMLAALG) form a helical membrane-spanning segment. Topologically, residues 877–962 (EFLYRSRIEA…PANTLYNTAV (86 aa)) are cytoplasmic.

This sequence belongs to the glutamate-gated ion channel (TC 1.A.10.1) family. Interacts with sol-1. Interacts with cni-1; the interaction negatively regulates export of glr-1 from the endoplasmic reticulum to synapses. Interacts with usp-46; the interaction results in deubiquitination of glr-1. Ubiquitinated. Deubiquitinated by usp-46 which prevents its degradation. Post-translationally, glycosylated. As to expression, command interneurons of the locomotory control circuit (AIB, AVA, AVB, AVD, AVE and PVC) and motor neurons (RMD, RIM, SMD, AVG, PVQ and URY).

The protein resides in the postsynaptic cell membrane. The protein localises to the endoplasmic reticulum. Its subcellular location is the synapse. It localises to the cell membrane. It is found in the recycling endosome. The protein resides in the cell projection. The protein localises to the dendrite. Its subcellular location is the perikaryon. Non-NMDA (N-methyl-D-aspartate) ionotropic glutamate receptor. L-glutamate acts as an excitatory neurotransmitter at many synapses in the central nervous system. The postsynaptic actions of glutamate are mediated by a variety of receptors that are named according to their selective agonists. May contribute to a sensory discrimination between mechanical and chemical stimuli. Plays a role in controlling movement in response to environmental cues such as food availability and mechanosensory stimulation such as the nose touch response. In AIB interneurons, promotes omega turns, a movement that frequently follows backwards locomotion or 'reversals' in response to environmental cues while possibly playing an inhibitory role in alternative neurons to inhibit omega turns. The sequence is that of Glutamate receptor 1 from Caenorhabditis elegans.